A 132-amino-acid polypeptide reads, in one-letter code: Small ribosomal subunit protein uS8 (132 aa).

It belongs to the universal ribosomal protein uS8 family. As to quaternary structure, part of the 30S ribosomal subunit. Contacts proteins S5 and S12.

In terms of biological role, one of the primary rRNA binding proteins, it binds directly to 16S rRNA central domain where it helps coordinate assembly of the platform of the 30S subunit. This Geobacillus kaustophilus (strain HTA426) protein is Small ribosomal subunit protein uS8.